A 272-amino-acid chain; its full sequence is Indole-3-glycerol phosphate synthase (272 aa).

This sequence belongs to the TrpC family.

It catalyses the reaction 1-(2-carboxyphenylamino)-1-deoxy-D-ribulose 5-phosphate + H(+) = (1S,2R)-1-C-(indol-3-yl)glycerol 3-phosphate + CO2 + H2O. It participates in amino-acid biosynthesis; L-tryptophan biosynthesis; L-tryptophan from chorismate: step 4/5. This Mycobacterium tuberculosis (strain ATCC 25177 / H37Ra) protein is Indole-3-glycerol phosphate synthase.